A 384-amino-acid polypeptide reads, in one-letter code: uncharacterized protein (384 aa).

This is an uncharacterized protein from Acanthamoeba polyphaga (Amoeba).